The sequence spans 144 residues: MKTYDIVIASDHSGYELKSIIIEYLQKKSLSVYDCGTHNTQSVDYPDYAKKVVNNIIEKLARIGILIGDTGIGMSIAANRSSEIRAALCVNVSTAESAKAHNDANILVLGAKTVDHKTVFDIIDKFLATKFEGGRHSVRLLKIE.

Position 12 (His12) interacts with substrate. His101 functions as the Proton donor in the catalytic mechanism. Arg135 is a substrate binding site.

The protein belongs to the LacAB/RpiB family.

The chain is Putative sugar phosphate isomerase RBE_0278 from Rickettsia bellii (strain RML369-C).